Reading from the N-terminus, the 627-residue chain is Chaperone protein DnaK (627 aa).

Threonine 197 carries the post-translational modification Phosphothreonine; by autocatalysis. Residues 598–611 (AYAKEQGGQQGAAD) are compositionally biased toward low complexity. Positions 598–627 (AYAKEQGGQQGAADAGKKADDDDVIDAEVE) are disordered. Residues 618 to 627 (DDDVIDAEVE) show a composition bias toward acidic residues.

This sequence belongs to the heat shock protein 70 family.

Its function is as follows. Acts as a chaperone. This chain is Chaperone protein DnaK, found in Sulfurovum sp. (strain NBC37-1).